Here is a 95-residue protein sequence, read N- to C-terminus: Aspartyl/glutamyl-tRNA(Asn/Gln) amidotransferase subunit C (95 aa).

It belongs to the GatC family. As to quaternary structure, heterotrimer of A, B and C subunits.

It catalyses the reaction L-glutamyl-tRNA(Gln) + L-glutamine + ATP + H2O = L-glutaminyl-tRNA(Gln) + L-glutamate + ADP + phosphate + H(+). The catalysed reaction is L-aspartyl-tRNA(Asn) + L-glutamine + ATP + H2O = L-asparaginyl-tRNA(Asn) + L-glutamate + ADP + phosphate + 2 H(+). In terms of biological role, allows the formation of correctly charged Asn-tRNA(Asn) or Gln-tRNA(Gln) through the transamidation of misacylated Asp-tRNA(Asn) or Glu-tRNA(Gln) in organisms which lack either or both of asparaginyl-tRNA or glutaminyl-tRNA synthetases. The reaction takes place in the presence of glutamine and ATP through an activated phospho-Asp-tRNA(Asn) or phospho-Glu-tRNA(Gln). The polypeptide is Aspartyl/glutamyl-tRNA(Asn/Gln) amidotransferase subunit C (Ruegeria sp. (strain TM1040) (Silicibacter sp.)).